Here is a 298-residue protein sequence, read N- to C-terminus: Cyclin-D4-2 (298 aa).

Belongs to the cyclin family. Cyclin D subfamily. In terms of assembly, interacts with CDKA-1 to form a kinase complex.

Its function is as follows. May promote cell division. The polypeptide is Cyclin-D4-2 (CYCD4-2) (Arabidopsis thaliana (Mouse-ear cress)).